The sequence spans 374 residues: 3-dehydroquinate synthase (374 aa).

The protein belongs to the archaeal-type DHQ synthase family.

The catalysed reaction is 2-amino-2,3,7-trideoxy-D-lyxo-hept-6-ulosonate + NAD(+) + H2O = 3-dehydroquinate + NH4(+) + NADH + H(+). In terms of biological role, catalyzes the oxidative deamination and cyclization of 2-amino-3,7-dideoxy-D-threo-hept-6-ulosonic acid (ADH) to yield 3-dehydroquinate (DHQ), which is fed into the canonical shikimic pathway of aromatic amino acid biosynthesis. In Methanothermobacter thermautotrophicus (strain ATCC 29096 / DSM 1053 / JCM 10044 / NBRC 100330 / Delta H) (Methanobacterium thermoautotrophicum), this protein is 3-dehydroquinate synthase.